Here is a 378-residue protein sequence, read N- to C-terminus: Dihydroorotate dehydrogenase (quinone) (378 aa).

FMN contacts are provided by residues 77-81 (AGFDK) and Thr-101. Lys-81 is a substrate binding site. Residue 126–130 (NRMGF) coordinates substrate. The FMN site is built by Asn-158 and Asn-191. Asn-191 provides a ligand contact to substrate. Catalysis depends on Ser-194, which acts as the Nucleophile. Asn-196 contacts substrate. Residues Lys-229 and Thr-257 each coordinate FMN. Position 258–259 (258–259 (NT)) interacts with substrate. Residues Gly-287, Gly-316, and 337 to 338 (YT) each bind FMN.

It belongs to the dihydroorotate dehydrogenase family. Type 2 subfamily. As to quaternary structure, monomer. Requires FMN as cofactor.

Its subcellular location is the cell membrane. The enzyme catalyses (S)-dihydroorotate + a quinone = orotate + a quinol. It participates in pyrimidine metabolism; UMP biosynthesis via de novo pathway; orotate from (S)-dihydroorotate (quinone route): step 1/1. In terms of biological role, catalyzes the conversion of dihydroorotate to orotate with quinone as electron acceptor. This is Dihydroorotate dehydrogenase (quinone) from Synechococcus sp. (strain ATCC 27144 / PCC 6301 / SAUG 1402/1) (Anacystis nidulans).